Reading from the N-terminus, the 509-residue chain is ATP synthase subunit alpha (509 aa).

169–176 is a binding site for ATP; the sequence is GDRQTGKT.

The protein belongs to the ATPase alpha/beta chains family. As to quaternary structure, F-type ATPases have 2 components, CF(1) - the catalytic core - and CF(0) - the membrane proton channel. CF(1) has five subunits: alpha(3), beta(3), gamma(1), delta(1), epsilon(1). CF(0) has three main subunits: a(1), b(2) and c(9-12). The alpha and beta chains form an alternating ring which encloses part of the gamma chain. CF(1) is attached to CF(0) by a central stalk formed by the gamma and epsilon chains, while a peripheral stalk is formed by the delta and b chains.

Its subcellular location is the cell inner membrane. It catalyses the reaction ATP + H2O + 4 H(+)(in) = ADP + phosphate + 5 H(+)(out). In terms of biological role, produces ATP from ADP in the presence of a proton gradient across the membrane. The alpha chain is a regulatory subunit. The polypeptide is ATP synthase subunit alpha (Brucella canis (strain ATCC 23365 / NCTC 10854 / RM-666)).